The following is a 173-amino-acid chain: Translationally-controlled tumor protein homolog (173 aa).

The 173-residue stretch at 1–173 (MIIYKDILTG…WKHGLEEYKV (173 aa)) folds into the TCTP domain.

It belongs to the TCTP family.

It localises to the cytoplasm. The protein resides in the cytoskeleton. Involved in protein synthesis. Involved in microtubule stabilization. This Aspergillus oryzae (strain ATCC 42149 / RIB 40) (Yellow koji mold) protein is Translationally-controlled tumor protein homolog.